A 191-amino-acid polypeptide reads, in one-letter code: dCTP deaminase, dUMP-forming (191 aa).

DCTP-binding positions include 101-106 (KSSLGR), D119, 127-129 (TLE), Q148, Y162, and Q174. The active-site Proton donor/acceptor is the E129. Residues 169 to 191 (SRYQGQRGPTASRSFQNFHRTQV) are disordered. The segment covering 171-191 (YQGQRGPTASRSFQNFHRTQV) has biased composition (polar residues).

Belongs to the dCTP deaminase family. Homotrimer.

It carries out the reaction dCTP + 2 H2O = dUMP + NH4(+) + diphosphate. It participates in pyrimidine metabolism; dUMP biosynthesis; dUMP from dCTP: step 1/1. Its function is as follows. Bifunctional enzyme that catalyzes both the deamination of dCTP to dUTP and the hydrolysis of dUTP to dUMP without releasing the toxic dUTP intermediate. This Streptomyces griseus subsp. griseus (strain JCM 4626 / CBS 651.72 / NBRC 13350 / KCC S-0626 / ISP 5235) protein is dCTP deaminase, dUMP-forming.